The following is a 172-amino-acid chain: uncharacterized protein (172 aa).

Positions 1–21 are cleaved as a signal peptide; that stretch reads MMKFKKCLLPVAMLASFTLAG. C22 carries the N-palmitoyl cysteine lipid modification. Residue C22 is the site of S-diacylglycerol cysteine attachment.

Its subcellular location is the cell membrane. This is an uncharacterized protein from Escherichia coli O157:H7.